The following is a 200-amino-acid chain: Adenylate kinase (200 aa).

10–15 (GAGKGT) lines the ATP pocket. The segment at 30–59 (STGDMLRAAVAAGTPVGLEAKSIMESGGLV) is NMP. Residues Thr31, Arg36, 57–59 (GLV), 85–88 (GFPR), and Gln92 contribute to the AMP site. The segment at 126–142 (KRAEETAARGQPVRKDD) is LID. Residue Arg127 participates in ATP binding. Residues Arg139 and Arg150 each contribute to the AMP site. Lys178 contacts ATP.

The protein belongs to the adenylate kinase family. As to quaternary structure, monomer.

The protein localises to the cytoplasm. The enzyme catalyses AMP + ATP = 2 ADP. It functions in the pathway purine metabolism; AMP biosynthesis via salvage pathway; AMP from ADP: step 1/1. Its function is as follows. Catalyzes the reversible transfer of the terminal phosphate group between ATP and AMP. Plays an important role in cellular energy homeostasis and in adenine nucleotide metabolism. The chain is Adenylate kinase from Methylorubrum populi (strain ATCC BAA-705 / NCIMB 13946 / BJ001) (Methylobacterium populi).